The primary structure comprises 322 residues: Malate dehydrogenase (322 aa).

NAD(+) is bound by residues 10–15 (GSGQIG) and aspartate 34. Substrate is bound by residues arginine 83 and arginine 89. NAD(+) contacts are provided by residues asparagine 96 and 119 to 121 (ITN). Substrate contacts are provided by asparagine 121 and arginine 152. Histidine 176 functions as the Proton acceptor in the catalytic mechanism.

The protein belongs to the LDH/MDH superfamily. MDH type 3 family.

It carries out the reaction (S)-malate + NAD(+) = oxaloacetate + NADH + H(+). Functionally, catalyzes the reversible oxidation of malate to oxaloacetate. This Bradyrhizobium diazoefficiens (strain JCM 10833 / BCRC 13528 / IAM 13628 / NBRC 14792 / USDA 110) protein is Malate dehydrogenase.